Here is a 278-residue protein sequence, read N- to C-terminus: MAEMRPGPLVGKQLNELPDHSPLLQPGLAELRRRVQEAGVPQTPQPLTDAFLLRFLRARDFDLDLAWRLMKNYYKWRAECPELSADLRPRSILGLLKAGYHGVLRSRDSTGSRVLIYRIAYWDPKVFTAYDVFRVSLITSELIVQEVETQRNGVKAIFDLEGWQVSHAFQITPSVAKKIAAVLTDSFPLKVRGIHLINEPVIFHAVFSMIKPFLTEKIKDRIHLHGNNYKSSMLQHFPDILPREYGGKEFSMEDICQEWTNFIMKSEDYLSSISETIQ.

The region spanning 88–253 is the CRAL-TRIO domain; sequence RPRSILGLLK…EYGGKEFSME (166 aa). Aspartate 185 is an a 1,2-diacyl-sn-glycero-3-phospho-(1D-myo-inositol-3,4-bisphosphate) binding site. Phenylalanine 187 contributes to the (+)-alpha-tocopherol binding site. 190–192 provides a ligand contact to a 1,2-diacyl-sn-glycero-3-phospho-(1D-myo-inositol-3,4-bisphosphate); it reads KVR. 208-211 is a binding site for a 1,2-diacyl-sn-glycero-3-phospho-(1D-myo-inositol-4,5-bisphosphate); sequence SMIK. Positions 217 and 221 each coordinate a 1,2-diacyl-sn-glycero-3-phospho-(1D-myo-inositol-3,4-bisphosphate).

As to quaternary structure, monomer and homotetramer. Phosphatidylinositol 4,5-bisphosphate binding induces the formation of homotetramers. Phosphatidylinositol 3,4-bisphosphate is less efficient in inducing tetramerization.

Its subcellular location is the cytoplasm. In terms of biological role, binds (+)-alpha-tocopherol, enhances its transfer between separate membranes, and stimulates its release from liver cells. Binds both phosphatidylinositol 3,4-bisphosphate and phosphatidylinositol 4,5-bisphosphate; the resulting conformation change is important for the release of the bound alpha-tocopherol. The protein is Alpha-tocopherol transfer protein (Ttpa) of Mus musculus (Mouse).